Consider the following 393-residue polypeptide: Cytochrome b (393 aa).

4 helical membrane-spanning segments follow: residues 32–52 (FGSLLGVCLIIQILTGVFLAM), 76–98 (WLIRYLHANTASFFFIFVYLHIG), 113–133 (LWSIGVIILVLMMAIAFLGYV), and 179–199 (FFSLHYLLPFVLAALAAMHLL). Residues H82 and H96 each contribute to the heme b site. H183 and H197 together coordinate heme b. H202 is a binding site for a ubiquinone. Transmembrane regions (helical) follow at residues 225 to 245 (FTFKDLVTIFVFLLALSLFVF), 289 to 309 (LIGVLAMFMSLLILLGMPILD), 321 to 341 (LMRFSFWTFVACFFILMFIGS), and 348 to 368 (YVEIGAAATAYYFAWFLVVVP).

This sequence belongs to the cytochrome b family. Fungal cytochrome b-c1 complex contains 10 subunits; 3 respiratory subunits, 2 core proteins and 5 low-molecular weight proteins. Cytochrome b-c1 complex is a homodimer. Requires heme b as cofactor.

Its subcellular location is the mitochondrion inner membrane. In terms of biological role, component of the ubiquinol-cytochrome c reductase complex (complex III or cytochrome b-c1 complex) that is part of the mitochondrial respiratory chain. The b-c1 complex mediates electron transfer from ubiquinol to cytochrome c. Contributes to the generation of a proton gradient across the mitochondrial membrane that is then used for ATP synthesis. The sequence is that of Cytochrome b (COB) from Mycosarcoma maydis (Corn smut fungus).